The chain runs to 468 residues: MRAAPSLRRASCLLLAAILDLARGYLTVNIEPLPPVVAGDAVTLKCNFKTDGRMREIVWYRVTDGGTIKQKIFTFDAMFSTNYSHMENYRKREDLVYQSTVRLPEVRISDNGPYECHVGIYDRATREKVVLASGNIFLNVMAPPTSIEVVAADSPAPFSRYQAQNFTLVCIVSGGKPAPMVYFKRDGEPIDAVPLTELPASSSGSVQDSRPFRSLLHRDVDDTKMQKSLSLLDTEYRAGRPYTERPSRSLTQDPNLFVQPTTENIPETVVSREFPRWVHSAEPVYFLRHSRTPGSDGTVEVRALLTWTLNPQIDNEALFSCEVKHPALSMPMQAEVTLVAPKGPKIMMTPSRARVGDTVRILVHGFQNEVFPEPMFTWTRVGSRLLDGSAEFDGKELVLERVPAELNGSMYRCTAQNPLGSTDTHTRLIVFENPNIPRGTEDSRGSASGPTGVRLTLVLALTVILELT.

A signal peptide spans 1–24; the sequence is MRAAPSLRRASCLLLAAILDLARG. 2 Ig-like domains span residues 25–132 and 344–429; these read YLTV…VVLA and PKIM…TRLI. The cysteines at positions 46 and 116 are disulfide-linked.

As to quaternary structure, interacts (Ig-like 1 domain) with NRXN2 (via Laminin G-like 1 domain) in a trans-interaction manner. In terms of tissue distribution, expressed in brain.

The protein localises to the postsynaptic cell membrane. In terms of biological role, involved in synaptic inhibition in the brain. Selectively regulates inhibitory presynaptic differentiation through interacting with presynaptic NRXN2. In Rattus norvegicus (Rat), this protein is Immunoglobulin superfamily member 21.